Here is a 280-residue protein sequence, read N- to C-terminus: Large ribosomal subunit protein uL2 (280 aa).

Disordered regions lie at residues 27–58 (STPEKSLVRPLHGHGGRNAHGRITTRHKGGGH) and 226–280 (MNPV…KHGR). Composition is skewed to basic residues over residues 37–58 (LHGHGGRNAHGRITTRHKGGGH) and 268–280 (IVRRRRTGKKHGR).

The protein belongs to the universal ribosomal protein uL2 family. In terms of assembly, part of the 50S ribosomal subunit. Forms a bridge to the 30S subunit in the 70S ribosome.

Its function is as follows. One of the primary rRNA binding proteins. Required for association of the 30S and 50S subunits to form the 70S ribosome, for tRNA binding and peptide bond formation. It has been suggested to have peptidyltransferase activity; this is somewhat controversial. Makes several contacts with the 16S rRNA in the 70S ribosome. This Mycobacterium marinum (strain ATCC BAA-535 / M) protein is Large ribosomal subunit protein uL2.